The chain runs to 120 residues: Large ribosomal subunit protein uL18 (120 aa).

Belongs to the universal ribosomal protein uL18 family. Part of the 50S ribosomal subunit; part of the 5S rRNA/L5/L18 subcomplex. In B.stearothermophilus only 2 proteins, L5 and L18 have been shown to be part of this subcomplex, unlike the case in E.coli and T.thermophilus where L25 (TL5) is also found. The protein, when overexpressed in E.coli, contains a phosphoserine, which is required for the protein to bind to 5S rRNA. It has been suggested, based solely on amino acid conservation, that this occurs on Ser-57.

Functionally, this is one of the proteins that bind and probably mediate the attachment of the 5S RNA into the large ribosomal subunit, where it forms part of the central protuberance. This Geobacillus stearothermophilus (Bacillus stearothermophilus) protein is Large ribosomal subunit protein uL18 (rplR).